The primary structure comprises 581 residues: Serine/threonine-protein kinase PINK1, mitochondrial (581 aa).

The transit peptide at 1–77 directs the protein to the mitochondrion; it reads MAVRQALGRG…RFFRQSVAGL (77 aa). The Mitochondrial intermembrane portion of the chain corresponds to 78–93; it reads AARLQRQFVVRAWGCA. The helical transmembrane segment at 94–110 threads the bilayer; that stretch reads GPCGRAVFLAFGLGLGL. The required for outer membrane localization stretch occupies residues 111–117; sequence IEEKQAE. At 111–581 the chain is on the cytoplasmic side; that stretch reads IEEKQAESRR…LLLCSWRAAL (471 aa). Residues 156–511 enclose the Protein kinase domain; the sequence is YLIGQSIGKG…VAANVLHLSL (356 aa). ATP contacts are provided by residues 162 to 170 and lysine 186; that span reads IGKGCSAAV. The disordered stretch occupies residues 189 to 208; the sequence is GLLPGRGPGTSAPGEGQERA. At serine 228 the chain carries Phosphoserine; by autocatalysis. Catalysis depends on aspartate 362, which acts as the Proton acceptor. Serine 402 bears the Phosphoserine; by autocatalysis mark.

The protein belongs to the protein kinase superfamily. Ser/Thr protein kinase family. As to quaternary structure, upon mitochondrial depolarization, it forms a supercomplex with TOM and TIM23 complexes. PINK1-TOM-TIM23 supercomplex formation requires PINK1 interaction with TOMM20 and TOMM70 and is critical for PINK1 stabilization at the outer mitochondrial membrane, kinase activation and downstream mitophagy. Upon mitochondrial depolarization, interacts with TIMM23; the interaction is required for PINK1 accumulation at the outer mitochondrial membrane, kinase activation by autophosphorylation and PRKN recruitement to mitochondria. Interacts with PRKN. Interacts with FBXO7. Forms a complex with PRKN and PARK7. Interacts with NENF. It depends on Mg(2+) as a cofactor. Post-translationally, proteolytically cleaved. In healthy cells, the precursor is continuously imported into the inner mitochondrial membrane (IMM), where it is proteolytically cleaved by mitochondrial-processing peptidase (MPP) and then undergoes further proteolytic cleavage by PARL or AFG3L2 to give rise to the 52 kDa short form. The 52 kDa short form is then released into the cytosol where it rapidly undergoes proteasome-dependent degradation. In unhealthy cells, when cellular stress conditions lead to the loss of mitochondrial membrane potential, mitochondrial import is impaired leading to the precursor accumulating on the outer mitochondrial membrane (OMM). If accumulation at the OMM fails and it is imported into the depolarized mitochondria, it undergoes cleavage by the IMM protease OMA1, promoting its subsequent degradation by the proteasome. In terms of processing, autophosphorylated. Loss of mitochondrial membrane potential results in the precursor accumulating on the outer mitochondrial membrane (OMM) where it is activated by autophosphorylation. Autophosphorylation at Ser-228 and Ser-402 is sufficient and essential for selective recruitment of PRKN to depolarized mitochondria, via PINK1-dependent phosphorylation of ubiquitin and maybe PRKN. In terms of tissue distribution, highly expressed in heart, skeletal muscle and testis, and at lower levels in brain, placenta, liver, kidney, pancreas, prostate, ovary and small intestine. Present in the embryonic testis from an early stage of development.

The protein resides in the mitochondrion outer membrane. It is found in the mitochondrion inner membrane. Its subcellular location is the cytoplasm. It localises to the cytosol. The enzyme catalyses L-seryl-[protein] + ATP = O-phospho-L-seryl-[protein] + ADP + H(+). The catalysed reaction is L-threonyl-[protein] + ATP = O-phospho-L-threonyl-[protein] + ADP + H(+). Its function is as follows. Serine/threonine-protein kinase which acts as a sensor of mitochondrial damage and protects against mitochondrial dysfunction during cellular stress. It phosphorylates mitochondrial proteins to coordinate mitochondrial quality control mechanisms that remove and replace dysfunctional mitochondrial components. Depending on the severity of mitochondrial damage, activity ranges from preventing apoptosis and stimulating mitochondrial biogenesis to eliminating severely damaged mitochondria via PINK1-PRKN-dependent mitophagy. When cellular stress results in irreversible mitochondrial damage, PINK1 accumulates at the outer mitochondrial membrane (OMM) where it phosphorylates pre-existing polyubiquitin chains at 'Ser-65', recruits PRKN from the cytosol to the OMM and activates PRKN by phosphorylation at 'Ser-65'; activated PRKN then ubiquinates VDAC1 and other OMM proteins to initiate mitophagy. The PINK1-PRKN pathway also promotes fission of damaged mitochondria through phosphorylation and PRKN-dependent degradation of mitochondrial proteins involved in fission such as MFN2. This prevents the refusion of unhealthy mitochondria with the mitochondrial network or initiates mitochondrial fragmentation facilitating their later engulfment by autophagosomes. Also promotes mitochondrial fission independently of PRKN and ATG7-mediated mitophagy, via the phosphorylation and activation of DNM1L. Regulates motility of damaged mitochondria by promoting the ubiquitination and subsequent degradation of MIRO1 and MIRO2; in motor neurons, this likely inhibits mitochondrial intracellular anterograde transport along the axons which probably increases the chance of the mitochondria undergoing mitophagy in the soma. Required for ubiquinone reduction by mitochondrial complex I by mediating phosphorylation of complex I subunit NDUFA10. Phosphorylates LETM1, positively regulating its mitochondrial calcium transport activity. In Homo sapiens (Human), this protein is Serine/threonine-protein kinase PINK1, mitochondrial (PINK1).